Reading from the N-terminus, the 86-residue chain is Protein Tat (86 aa).

The segment at 1-24 (MEPVDPRLEPWKHPGSQPKTACTN) is interaction with human CREBBP. A transactivation region spans residues 1 to 48 (MEPVDPRLEPWKHPGSQPKTACTNCYCKKCCFHCQVCFITKALGISYG). 3 residues coordinate Zn(2+): Cys-22, Cys-25, and Cys-27. The segment at 22–37 (CTNCYCKKCCFHCQVC) is cysteine-rich. Lys-28 is subject to N6-acetyllysine; by host PCAF. Residues Cys-30, His-33, Cys-34, and Cys-37 each coordinate Zn(2+). The core stretch occupies residues 38-48 (FITKALGISYG). A compositionally biased stretch (basic residues) spans 48 to 58 (GRKKRRQRRRA). The disordered stretch occupies residues 48-86 (GRKKRRQRRRAPQGSQTHQVSLSKQPTSQSRGDPTGPKE). The Nuclear localization signal, RNA-binding (TAR), and protein transduction signature appears at 49–57 (RKKRRQRRR). The interaction with the host capping enzyme RNGTT stretch occupies residues 49–86 (RKKRRQRRRAPQGSQTHQVSLSKQPTSQSRGDPTGPKE). 2 positions are modified to N6-acetyllysine; by host EP300 and GCN5L2: Lys-50 and Lys-51. 2 positions are modified to asymmetric dimethylarginine; by host PRMT6: Arg-52 and Arg-53. The span at 60–79 (QGSQTHQVSLSKQPTSQSRG) shows a compositional bias: polar residues. Lys-71 is covalently cross-linked (Glycyl lysine isopeptide (Lys-Gly) (interchain with G-Cter in ubiquitin)). The Cell attachment site motif lies at 78 to 80 (RGD).

It belongs to the lentiviruses Tat family. As to quaternary structure, interacts with host CCNT1. Associates with the P-TEFb complex composed at least of Tat, P-TEFb (CDK9 and CCNT1), TAR RNA, RNA Pol II. Recruits the HATs CREBBP, TAF1/TFIID, EP300, PCAF and GCN5L2. Interacts with host KAT5/Tip60; this interaction targets the latter to degradation. Interacts with the host deacetylase SIRT1. Interacts with host capping enzyme RNGTT; this interaction stimulates RNGTT. Binds to host KDR, and to the host integrins ITGAV/ITGB3 and ITGA5/ITGB1. Interacts with host KPNB1/importin beta-1 without previous binding to KPNA1/importin alpha-1. Interacts with EIF2AK2. Interacts with host nucleosome assembly protein NAP1L1; this interaction may be required for the transport of Tat within the nucleus, since the two proteins interact at the nuclear rim. Interacts with host C1QBP/SF2P32; this interaction involves lysine-acetylated Tat. Interacts with the host chemokine receptors CCR2, CCR3 and CXCR4. Interacts with host DPP4/CD26; this interaction may trigger an anti-proliferative effect. Interacts with host LDLR. Interacts with the host extracellular matrix metalloproteinase MMP1. Interacts with host PRMT6; this interaction mediates Tat's methylation. Interacts with, and is ubiquitinated by MDM2/Hdm2. Interacts with host PSMC3 and HTATIP2. Interacts with STAB1; this interaction may overcome SATB1-mediated repression of IL2 and IL2RA (interleukin) in T cells by binding to the same domain than HDAC1. Interacts (when acetylated) with human CDK13, thereby increasing HIV-1 mRNA splicing and promoting the production of the doubly spliced HIV-1 protein Nef. Interacts with host TBP; this interaction modulates the activity of transcriptional pre-initiation complex. Interacts with host RELA. Interacts with host PLSCR1; this interaction negatively regulates Tat transactivation activity by altering its subcellular distribution. In terms of processing, asymmetrical arginine methylation by host PRMT6 seems to diminish the transactivation capacity of Tat and affects the interaction with host CCNT1. Acetylation by EP300, CREBBP, GCN5L2/GCN5 and PCAF regulates the transactivation activity of Tat. EP300-mediated acetylation of Lys-50 promotes dissociation of Tat from the TAR RNA through the competitive binding to PCAF's bromodomain. In addition, the non-acetylated Tat's N-terminus can also interact with PCAF. PCAF-mediated acetylation of Lys-28 enhances Tat's binding to CCNT1. Lys-50 is deacetylated by SIRT1. Post-translationally, polyubiquitination by host MDM2 does not target Tat to degradation, but activates its transactivation function and fosters interaction with CCNT1 and TAR RNA. In terms of processing, phosphorylated by EIF2AK2 on serine and threonine residues adjacent to the basic region important for TAR RNA binding and function. Phosphorylation of Tat by EIF2AK2 is dependent on the prior activation of EIF2AK2 by dsRNA.

Its subcellular location is the host nucleus. It is found in the host nucleolus. It localises to the host cytoplasm. The protein localises to the secreted. Transcriptional activator that increases RNA Pol II processivity, thereby increasing the level of full-length viral transcripts. Recognizes a hairpin structure at the 5'-LTR of the nascent viral mRNAs referred to as the transactivation responsive RNA element (TAR) and recruits the cyclin T1-CDK9 complex (P-TEFb complex) that will in turn hyperphosphorylate the RNA polymerase II to allow efficient elongation. The CDK9 component of P-TEFb and other Tat-activated kinases hyperphosphorylate the C-terminus of RNA Pol II that becomes stabilized and much more processive. Other factors such as HTATSF1/Tat-SF1, SUPT5H/SPT5, and HTATIP2 are also important for Tat's function. Besides its effect on RNA Pol II processivity, Tat induces chromatin remodeling of proviral genes by recruiting the histone acetyltransferases (HATs) CREBBP, EP300 and PCAF to the chromatin. This also contributes to the increase in proviral transcription rate, especially when the provirus integrates in transcriptionally silent region of the host genome. To ensure maximal activation of the LTR, Tat mediates nuclear translocation of NF-kappa-B by interacting with host RELA. Through its interaction with host TBP, Tat may also modulate transcription initiation. Tat can reactivate a latently infected cell by penetrating in it and transactivating its LTR promoter. In the cytoplasm, Tat is thought to act as a translational activator of HIV-1 mRNAs. In terms of biological role, extracellular circulating Tat can be endocytosed by surrounding uninfected cells via the binding to several surface receptors such as CD26, CXCR4, heparan sulfate proteoglycans (HSPG) or LDLR. Neurons are rarely infected, but they internalize Tat via their LDLR. Through its interaction with nuclear HATs, Tat is potentially able to control the acetylation-dependent cellular gene expression. Modulates the expression of many cellular genes involved in cell survival, proliferation or in coding for cytokines or cytokine receptors. Tat plays a role in T-cell and neurons apoptosis. Tat induced neurotoxicity and apoptosis probably contribute to neuroAIDS. Circulating Tat also acts as a chemokine-like and/or growth factor-like molecule that binds to specific receptors on the surface of the cells, affecting many cellular pathways. In the vascular system, Tat binds to ITGAV/ITGB3 and ITGA5/ITGB1 integrins dimers at the surface of endothelial cells and competes with bFGF for heparin-binding sites, leading to an excess of soluble bFGF. This chain is Protein Tat, found in Human immunodeficiency virus type 1 group M subtype B (isolate PCV12) (HIV-1).